Consider the following 101-residue polypeptide: Integration host factor subunit beta (101 aa).

This sequence belongs to the bacterial histone-like protein family. In terms of assembly, heterodimer of an alpha and a beta chain.

Functionally, this protein is one of the two subunits of integration host factor, a specific DNA-binding protein that functions in genetic recombination as well as in transcriptional and translational control. In Maricaulis maris (strain MCS10) (Caulobacter maris), this protein is Integration host factor subunit beta.